We begin with the raw amino-acid sequence, 268 residues long: Protein MSS18 (268 aa).

The protein to baculovirus occlusion-derived virus envelope protein E27 (ODV-E27).

The protein localises to the mitochondrion. In terms of biological role, involved in splicing of intron aI5-beta of the mitochondrial COX1 transcript. The polypeptide is Protein MSS18 (MSS18) (Saccharomyces cerevisiae (strain ATCC 204508 / S288c) (Baker's yeast)).